The following is a 107-amino-acid chain: Thioredoxin 1 (107 aa).

The 106-residue stretch at 2-107 (SAAAQVTDST…TLSQTLEKHL (106 aa)) folds into the Thioredoxin domain. C32 and C35 are disulfide-bonded.

The protein belongs to the thioredoxin family.

In terms of biological role, participates in various redox reactions through the reversible oxidation of its active center dithiol to a disulfide and catalyzes dithiol-disulfide exchange reactions. This Nostoc sp. (strain PCC 7120 / SAG 25.82 / UTEX 2576) protein is Thioredoxin 1 (trxA).